Here is a 407-residue protein sequence, read N- to C-terminus: Phosphoglycerate kinase (407 aa).

Substrate is bound by residues 24 to 26 (DIN), R39, 60 to 63 (HQSR), R117, and R157. Residues E330 and 355 to 358 (GGHI) contribute to the ATP site.

Belongs to the phosphoglycerate kinase family.

The protein resides in the cytoplasm. The enzyme catalyses (2R)-3-phosphoglycerate + ATP = (2R)-3-phospho-glyceroyl phosphate + ADP. It functions in the pathway carbohydrate degradation; glycolysis; pyruvate from D-glyceraldehyde 3-phosphate: step 2/5. The protein is Phosphoglycerate kinase (pgk) of Archaeoglobus fulgidus (strain ATCC 49558 / DSM 4304 / JCM 9628 / NBRC 100126 / VC-16).